A 255-amino-acid chain; its full sequence is MTSVNPSSSKPSALILLPAVDVVEGRAVRLVQGQAGSETEYGSALDAAMTWQRDGAEWIHLVDLDAAFGRGSNRELLAEVVGKLDVAVELSGGIRDDDSLAAALATGCARVNLGTAALENPQWCAKVVAEHGDKVAVGLDVKIVDGQHRLRGRGWETDGGDLWTVLDRLDGEGCSRFVVTDVTKDGTLNGPNLELLTQVCERTDAPVIASGGVSSLDDLRAIATLTDRGVEGAIVGKALYAGRFTLPQALDAVGP.

Aspartate 21 (proton acceptor) is an active-site residue. Aspartate 140 serves as the catalytic Proton donor.

It belongs to the HisA/HisF family.

It localises to the cytoplasm. It carries out the reaction 1-(5-phospho-beta-D-ribosyl)-5-[(5-phospho-beta-D-ribosylamino)methylideneamino]imidazole-4-carboxamide = 5-[(5-phospho-1-deoxy-D-ribulos-1-ylimino)methylamino]-1-(5-phospho-beta-D-ribosyl)imidazole-4-carboxamide. The catalysed reaction is N-(5-phospho-beta-D-ribosyl)anthranilate = 1-(2-carboxyphenylamino)-1-deoxy-D-ribulose 5-phosphate. Its pathway is amino-acid biosynthesis; L-histidine biosynthesis; L-histidine from 5-phospho-alpha-D-ribose 1-diphosphate: step 4/9. It functions in the pathway amino-acid biosynthesis; L-tryptophan biosynthesis; L-tryptophan from chorismate: step 3/5. In terms of biological role, involved in both the histidine and tryptophan biosynthetic pathways. The polypeptide is Phosphoribosyl isomerase A (Mycolicibacterium vanbaalenii (strain DSM 7251 / JCM 13017 / BCRC 16820 / KCTC 9966 / NRRL B-24157 / PYR-1) (Mycobacterium vanbaalenii)).